The sequence spans 330 residues: uncharacterized protein (330 aa).

The next 10 helical transmembrane spans lie at Leu-15–Leu-35, Phe-41–Gly-61, Gly-72–Ala-92, Leu-102–Phe-122, Val-125–Gly-145, Leu-175–Ser-195, Val-201–Val-221, Leu-238–Ser-258, Ser-264–Leu-284, and Glu-286–Ile-306. 2 consecutive EamA domains span residues Phe-22–Leu-146 and Leu-182–Gln-308.

It belongs to the EamA transporter family.

The protein localises to the cell membrane. This is an uncharacterized protein from Synechocystis sp. (strain ATCC 27184 / PCC 6803 / Kazusa).